A 440-amino-acid chain; its full sequence is uncharacterized protein (440 aa).

A run of 10 helical transmembrane segments spans residues 26–46 (NGLIWCWWLFVISLVLASSTF), 59–79 (FVFWILALIFGVAVAFINGVL), 96–116 (FFLGFFFPQMAFCNALWLKLK), 138–158 (LTLSVFVVWGIYCVLATSIYL), 211–231 (FLVFFIIPTITLITLGCYLFA), 241–261 (LRKPLSTLSIVIMLTDVVGII), 263–283 (WIIIDILLIWLNVPFVIFVIF), 284–304 (WVIKLVLPLAMIGTFVSSLTI), 394–414 (FLIIFFSIISLILATIGSVFI), and 418–438 (IVQISIPFYVIGGVIWFFTFI).

The protein to M.pneumoniae MPN_087.

It is found in the cell membrane. This is an uncharacterized protein from Mycoplasma pneumoniae (strain ATCC 29342 / M129 / Subtype 1) (Mycoplasmoides pneumoniae).